Here is a 249-residue protein sequence, read N- to C-terminus: 3-deoxy-D-manno-octulosonic acid kinase (249 aa).

Residue D175 is part of the active site.

This sequence belongs to the protein kinase superfamily. KdkA/RfaP family.

It localises to the cell inner membrane. The enzyme catalyses an alpha-Kdo-(2-&gt;6)-lipid IVA + ATP = a 4-O-phospho-alpha-Kdo-(2-&gt;6)-lipid IVA + ADP + H(+). The protein operates within bacterial outer membrane biogenesis; LPS core biosynthesis. Functionally, catalyzes the ATP-dependent phosphorylation of the 3-deoxy-D-manno-octulosonic acid (Kdo) residue in Kdo-lipid IV(A) at the 4-OH position. The chain is 3-deoxy-D-manno-octulosonic acid kinase from Xanthomonas euvesicatoria pv. vesicatoria (strain 85-10) (Xanthomonas campestris pv. vesicatoria).